The primary structure comprises 272 residues: HMP-PP phosphatase (272 aa).

D8 acts as the Nucleophile in catalysis. Mg(2+) contacts are provided by D8, D10, and D212.

This sequence belongs to the HAD-like hydrolase superfamily. Cof family. Requires Mg(2+) as cofactor.

It carries out the reaction 4-amino-2-methyl-5-(diphosphooxymethyl)pyrimidine + H2O = 4-amino-2-methyl-5-(phosphooxymethyl)pyrimidine + phosphate + H(+). Its function is as follows. Catalyzes the hydrolysis of 4-amino-2-methyl-5-hydroxymethylpyrimidine pyrophosphate (HMP-PP) to 4-amino-2-methyl-5-hydroxymethylpyrimidine phosphate (HMP-P). In Citrobacter koseri (strain ATCC BAA-895 / CDC 4225-83 / SGSC4696), this protein is HMP-PP phosphatase.